The sequence spans 122 residues: Large ribosomal subunit protein eL18 (122 aa).

This sequence belongs to the eukaryotic ribosomal protein eL18 family.

This chain is Large ribosomal subunit protein eL18, found in Picrophilus torridus (strain ATCC 700027 / DSM 9790 / JCM 10055 / NBRC 100828 / KAW 2/3).